The chain runs to 120 residues: Large ribosomal subunit protein bL19 (120 aa).

It belongs to the bacterial ribosomal protein bL19 family.

Functionally, this protein is located at the 30S-50S ribosomal subunit interface and may play a role in the structure and function of the aminoacyl-tRNA binding site. This Microcystis aeruginosa (strain NIES-843 / IAM M-2473) protein is Large ribosomal subunit protein bL19.